The following is a 298-amino-acid chain: NFU1 iron-sulfur cluster scaffold homolog, mitochondrial (298 aa).

Residues 194-262 (IKELLDTRIR…IPEVESVEQV (69 aa)) form a nifU region. [4Fe-4S] cluster is bound by residues C231 and C234.

This sequence belongs to the NifU family.

Its subcellular location is the mitochondrion. In terms of biological role, molecular scaffold for [Fe-S] cluster assembly of mitochondrial iron-sulfur proteins. The polypeptide is NFU1 iron-sulfur cluster scaffold homolog, mitochondrial (Drosophila grimshawi (Hawaiian fruit fly)).